The sequence spans 426 residues: Methylamine dehydrogenase heavy chain (426 aa).

The first 31 residues, 1–31 (MASARESTPRYLTLIGATLACSALALGAAQA), serve as a signal peptide directing secretion. The interval 32–64 (QTEPAEPEAPAETAAADAAGQTEGQRGAAEAAA) is disordered. A disulfide bridge connects residues C221 and C236.

This sequence belongs to the aromatic amine dehydrogenase heavy chain family. As to quaternary structure, tetramer of two light and two heavy chains.

It localises to the periplasm. The enzyme catalyses 2 oxidized [amicyanin] + methylamine + H2O = 2 reduced [amicyanin] + formaldehyde + NH4(+) + 2 H(+). Functionally, methylamine dehydrogenase carries out the oxidation of methylamine. Electrons are passed from methylamine dehydrogenase to amicyanin. The protein is Methylamine dehydrogenase heavy chain (mauB) of Paracoccus versutus (Thiobacillus versutus).